The following is a 666-amino-acid chain: Endogenous retrovirus group K member 19 Gag polyprotein (666 aa).

Gly2 carries the N-myristoyl glycine lipid modification. Disordered stretches follow at residues 170-189 (LVGP…AGQV) and 223-264 (PLES…GSEL). Residues 232 to 247 (GMPPAPQGRAPYPQPP) are compositionally biased toward pro residues. 2 CCHC-type zinc fingers span residues 544–561 (GKCY…NCPV) and 580–597 (DLCP…QCRS). The interval 598 to 640 (KFDKNGQPLSGNEQRGQPQAPQQTGAFPIQPFVPHGFQGQQPP) is disordered. The segment covering 604-622 (QPLSGNEQRGQPQAPQQTG) has biased composition (polar residues).

It belongs to the beta type-B retroviral Gag protein family. HERV class-II K(HML-2) gag subfamily. Post-translationally, myristoylation is essential for retroviral assembly. Alteration of the glycine residue leads to a block in the budding of particles and an accumulation of Gag inside the cell. In terms of processing, specific enzymatic cleavages may yield mature proteins.

The protein resides in the cell membrane. Its function is as follows. The products of the Gag polyproteins of infectious retroviruses perform highly complex orchestrated tasks during the assembly, budding, maturation, and infection stages of the viral replication cycle. During viral assembly, the proteins form membrane associations and self-associations that ultimately result in budding of an immature virion from the infected cell. Gag precursors also function during viral assembly to selectively bind and package two plus strands of genomic RNA. Endogenous Gag proteins may have kept, lost or modified their original function during evolution. The sequence is that of Endogenous retrovirus group K member 19 Gag polyprotein (ERVK-19) from Homo sapiens (Human).